A 338-amino-acid polypeptide reads, in one-letter code: Nicotinate-nucleotide--dimethylbenzimidazole phosphoribosyltransferase (338 aa).

Residue Glu305 is the Proton acceptor of the active site.

Belongs to the CobT family. Homodimer.

The catalysed reaction is 5,6-dimethylbenzimidazole + nicotinate beta-D-ribonucleotide = alpha-ribazole 5'-phosphate + nicotinate + H(+). It participates in nucleoside biosynthesis; alpha-ribazole biosynthesis; alpha-ribazole from 5,6-dimethylbenzimidazole: step 1/2. Its function is as follows. Catalyzes the synthesis of alpha-ribazole-5'-phosphate from nicotinate mononucleotide (NAMN) and 5,6-dimethylbenzimidazole (DMB). This Sinorhizobium sp protein is Nicotinate-nucleotide--dimethylbenzimidazole phosphoribosyltransferase (cobU).